We begin with the raw amino-acid sequence, 183 residues long: Regulatory protein RecX (183 aa).

The span at Met-1–Ser-12 shows a compositional bias: polar residues. Residues Met-1–Ala-26 form a disordered region.

This sequence belongs to the RecX family.

It localises to the cytoplasm. Modulates RecA activity. This Mycobacterium sp. (strain KMS) protein is Regulatory protein RecX.